The following is a 238-amino-acid chain: uncharacterized protein (238 aa).

Disordered regions lie at residues 1-51 and 214-238; these read MPCT…ASCA and ITVE…FPTA. Low complexity predominate over residues 16–31; it reads ATWRTARPAPRRCGSC.

This is an uncharacterized protein from Streptomyces griseus.